We begin with the raw amino-acid sequence, 343 residues long: Anthranilate phosphoribosyltransferase (343 aa).

Residues G84, 87-88 (GD), T92, 94-97 (NIST), 112-120 (KHGNRGVSS), and S124 contribute to the 5-phospho-alpha-D-ribose 1-diphosphate site. G84 lines the anthranilate pocket. S96 serves as a coordination point for Mg(2+). Residue N115 coordinates anthranilate. Residue R170 coordinates anthranilate. Mg(2+)-binding residues include D229 and E230.

This sequence belongs to the anthranilate phosphoribosyltransferase family. In terms of assembly, homodimer. Mg(2+) is required as a cofactor.

It carries out the reaction N-(5-phospho-beta-D-ribosyl)anthranilate + diphosphate = 5-phospho-alpha-D-ribose 1-diphosphate + anthranilate. It participates in amino-acid biosynthesis; L-tryptophan biosynthesis; L-tryptophan from chorismate: step 2/5. Its function is as follows. Catalyzes the transfer of the phosphoribosyl group of 5-phosphorylribose-1-pyrophosphate (PRPP) to anthranilate to yield N-(5'-phosphoribosyl)-anthranilate (PRA). This chain is Anthranilate phosphoribosyltransferase, found in Burkholderia ambifaria (strain MC40-6).